A 156-amino-acid chain; its full sequence is Small ribosomal subunit protein uS7 (156 aa).

It belongs to the universal ribosomal protein uS7 family. In terms of assembly, part of the 30S ribosomal subunit. Contacts proteins S9 and S11.

One of the primary rRNA binding proteins, it binds directly to 16S rRNA where it nucleates assembly of the head domain of the 30S subunit. Is located at the subunit interface close to the decoding center, probably blocks exit of the E-site tRNA. The chain is Small ribosomal subunit protein uS7 from Xanthobacter autotrophicus (strain ATCC BAA-1158 / Py2).